Reading from the N-terminus, the 180-residue chain is Pyruvoyl-dependent arginine decarboxylase (180 aa).

Ser41 is modified (pyruvic acid (Ser)).

It belongs to the PdaD family. Pyruvate serves as cofactor.

The catalysed reaction is L-arginine + H(+) = agmatine + CO2. The polypeptide is Pyruvoyl-dependent arginine decarboxylase (Methanococcoides burtonii (strain DSM 6242 / NBRC 107633 / OCM 468 / ACE-M)).